The following is a 1146-amino-acid chain: MSLRFIYGRAGSGKTRFCLEEIKSRITSKATHPLVLLVPEQFTFQAERDLISVLGTGGILKTEVLSFSRIAYRTFNEAGGITYPHIHSAGKCMILYRILDKMKGSFRVFSKTADRQGFVNTLSTLITEFKKYNVTPEDLEKVSKELEEDNPVKEKLMELTAIYDLFEKTIAERYRDPDDDLTLAAKKLGSIPLYDGAEIWIDGFTGFTPQEYQIIGQLMKKAQRVNISFCTDCLDGDLNDTDIFSSIKTAYRKLVKMAKENGIPVEPSVVLNSKPLFRFSQSPELSHLEQYLYAYPYKTYNEKTKDISLFSSVNIFAEVEACARDIVRLCRDRGMRYREIAVVTGNLDGYEKLIEAVFSEYGIPCFIDRKVDIVNHPLVRLIMSMLDIFIENWSYEAVFRYLKTGLTGIDRESIDRLENYVLACGIRGSCWTETEEWKMVPELIPNEKSLEEAKELLEDVNRIRAQVVAPLMEFRKKTKGRKKASDFCASLYDFLCTLGIPEKIEDAIEKFRESGNLNLANEYSQVWNAVMEVFDHTVEVMGDETFGIEKFARILEIGFGECKIGLIPASLDQVLVGSLERSRSHEIKALYILGANDGVFPPAVMEEGILSDQDRAVLNNAGIELASDTRTQAFDGQYLIYRALTTAGNYLRISWSIADHEGRTLRPSLVVFRLRKLFLNITETSNILPSGSLEEEMELLSGNSPAFKSMVSALRQKADGKEIKPVWQEAYRWFAVQDEWRGKCEALRAAFQYKNLAQPVSREKIAALYGEPAVSSVSRLEKYTACPFAFYVQYGLGAKERQIYSLRPPDVGTFMHAVIEKFSRMVAKRNISWRDLDRDWCSEKVSEIVDEMLEKMQGSGIAASRRYTALTLRLKRVVARAVWLIAEHIRRSSFEPVAYEVGFGENGKYPPIVIELDSGEKIHLTGRIDRVDALKTEDGTYLRIVDYKSGGKDFKLSDVFYGLQIQLITYLDALWESGEADENNPVLPGGVLYFKIDDPIIRGNGRMTEEEIEKAIMKQLRMKGLLLADVKLIREMDKDIEGSSMIIPATVNKDGSLGKNTSAATMEQFKLLRKYVRKLLKNLCEEIMKGNVSINPYKKKGTTSCKYCSFLPVCQFDTTMKENTFKLLYDKKDDEIWSLMAQEEEE.

Positions 1–280 (MSLRFIYGRA…LNSKPLFRFS (280 aa)) constitute a UvrD-like helicase ATP-binding domain. 8–15 (GRAGSGKT) contributes to the ATP binding site. The 309-residue stretch at 276 to 584 (LFRFSQSPEL…LVGSLERSRS (309 aa)) folds into the UvrD-like helicase C-terminal domain. [4Fe-4S] cluster contacts are provided by cysteine 786, cysteine 1105, cysteine 1108, and cysteine 1114.

It belongs to the helicase family. AddB/RexB type 1 subfamily. In terms of assembly, heterodimer of AddA and AddB. Mg(2+) serves as cofactor. [4Fe-4S] cluster is required as a cofactor.

Its function is as follows. The heterodimer acts as both an ATP-dependent DNA helicase and an ATP-dependent, dual-direction single-stranded exonuclease. Recognizes the chi site generating a DNA molecule suitable for the initiation of homologous recombination. The AddB subunit has 5' -&gt; 3' nuclease activity but not helicase activity. The protein is ATP-dependent helicase/deoxyribonuclease subunit B of Acetivibrio thermocellus (strain ATCC 27405 / DSM 1237 / JCM 9322 / NBRC 103400 / NCIMB 10682 / NRRL B-4536 / VPI 7372) (Clostridium thermocellum).